A 581-amino-acid polypeptide reads, in one-letter code: Ketol-acid reductoisomerase, chloroplastic (581 aa).

Residues 1–50 constitute a chloroplast transit peptide; the sequence is MAAVTSSCSTAISASSKTLAKPVAASFAPTNLSFSKLSPQSIRARRSITV. The KARI N-terminal Rossmann domain maps to 92-290; the sequence is VRGGRDLFHL…ALGSPFTFAT (199 aa). Residues 113 to 120, 146 to 151, and 185 to 189 contribute to the NADP(+) site; these read GVIGWGSQ, RKGSSS, and SDSAQ. Residue His-210 is part of the active site. KARI C-terminal knotted domains lie at 291-439 and 440-576; these read TLEQ…RPAG and DLGP…RPEL. Positions 299, 303, 476, and 480 each coordinate Mg(2+). Position 502 (Ser-502) interacts with substrate.

This sequence belongs to the ketol-acid reductoisomerase family. In terms of assembly, homodimer. Requires Mg(2+) as cofactor.

It localises to the plastid. The protein resides in the chloroplast. It carries out the reaction (2R)-2,3-dihydroxy-3-methylbutanoate + NADP(+) = (2S)-2-acetolactate + NADPH + H(+). The catalysed reaction is (2R,3R)-2,3-dihydroxy-3-methylpentanoate + NADP(+) = (S)-2-ethyl-2-hydroxy-3-oxobutanoate + NADPH + H(+). The protein operates within amino-acid biosynthesis; L-isoleucine biosynthesis; L-isoleucine from 2-oxobutanoate: step 2/4. It functions in the pathway amino-acid biosynthesis; L-valine biosynthesis; L-valine from pyruvate: step 2/4. This chain is Ketol-acid reductoisomerase, chloroplastic (PGAAIR), found in Pisum sativum (Garden pea).